Reading from the N-terminus, the 640-residue chain is Choline O-acetyltransferase (640 aa).

Basic and acidic residues predominate over residues 1–22 (MPDLEKDMQKKEKDSRSKDEPA). The interval 1–28 (MPDLEKDMQKKEKDSRSKDEPAVPKLPV) is disordered. Catalysis depends on His-334, which acts as the Proton acceptor. Residues 412–424 (GKEF…TSPD), Ser-450, and Gln-551 each bind CoA.

Belongs to the carnitine/choline acetyltransferase family. As to expression, detected in brain and in embryonic retina.

The catalysed reaction is choline + acetyl-CoA = acetylcholine + CoA. In terms of biological role, catalyzes the reversible synthesis of acetylcholine (ACh) from acetyl CoA and choline at cholinergic synapses. This Gallus gallus (Chicken) protein is Choline O-acetyltransferase (CHAT).